A 1184-amino-acid chain; its full sequence is MVLLWEPAGAWLALGLALALGPSVAAAAPRQDCTGVECPPLENCIEEALEPGACCATCVQQGCACEGYQYYDCLQGGFVRGRVPAGQSYFVDFGSTECSCPPGGGKISCQFMLCPELPPNCIEAVVVADSCPQCGQVGCVHAGHKYAAGHTVHLPPCRACHCPDAGGELICYQLPGCHGNFSDAEEGDPERHYEDPYSYDQEVAEVEAATALGGEVQAGAVQAGAGGPPAALGGGSQPLSTIQAPPWPAVLPRPTAAAALGPPAPVQAKARRVTEDSEEEEEEEEEREEMAVTEQLAAGGHRGLDGLPTTAPAGPSLPIQEERAEAGARAEAGARPEENLILDAQATSRSTGPEGVTHAPSLGKAALVPTQAVPGSPRDPVKPSPHNILSTSLPDAAWIPPTREVPRKPQVLPHSHVEEDTDPNSVHSIPRSSPEGSTKDLIETCCAAGQQWAIDNDECLEIPESGTEDNVCRTAQRHCCVSYLQEKSCMAGVLGAKEGETCGAEDNDSCGISLYKQCCDCCGLGLRVRAEGQSCESNPNLGYPCNHVMLSCCEGEEPLIVPEVRRPPEPAAAPRRVSEAEMAGREALSLGTEAELPNSLPGDDQDECLLLPGELCQHLCINTVGSYHCACFPGFSLQDDGRTCRPEGHPPQPEAPQEPALKSEFSQVASNTIPLPLPQPNTCKDNGPCKQVCSTVGGSAICSCFPGYAIMADGVSCEDINECVTDLHTCSRGEHCVNTLGSFHCYKALTCEPGYALKDGECEDVDECAMGTHTCQPGFLCQNTKGSFYCQARQRCMDGFLQDPEGNCVDINECTSLSEPCRPGFSCINTVGSYTCQRNPLICARGYHASDDGTKCVDVNECETGVHRCGEGQVCHNLPGSYRCDCKAGFQRDAFGRGCIDVNECWASPGRLCQHTCENTLGSYRCSCASGFLLAADGKRCEDVNECEAQRCSQECANIYGSYQCYCRQGYQLAEDGHTCTDIDECAQGAGILCTFRCLNVPGSYQCACPEQGYTMTANGRSCKDVDECALGTHNCSEAETCHNIQGSFRCLRFECPPNYVQVSKTKCERTTCHDFLECQNSPARITHYQLNFQTGLLVPAHIFRIGPAPAFTGDTIALNIIKGNEEGYFGTRRLNAYTGVVYLQRAVLEPRDFALDVEMKLWRQGSVTTFLAKMHIFFTTFAL.

Residues 1–27 (MVLLWEPAGAWLALGLALALGPSVAAA) form the signal peptide. Residues 28–177 (APRQDCTGVE…ELICYQLPGC (150 aa)) form a subdomain NA (Cys-rich) region. Positions 28–444 (APRQDCTGVE…EGSTKDLIET (417 aa)) are n. The segment at 178-444 (HGNFSDAEEG…EGSTKDLIET (267 aa)) is subdomain NB (Cys-free). A glycan (N-linked (GlcNAc...) asparagine) is linked at asparagine 180. 2 disordered regions span residues 221-293 (VQAG…MAVT) and 399-437 (IPPTREVPRKPQVLPHSHVEEDTDPNSVHSIPRSSPEGS). Residues 224 to 236 (GAGGPPAALGGGS) show a composition bias toward gly residues. The span at 252-261 (PRPTAAAALG) shows a compositional bias: low complexity. The segment covering 276–288 (DSEEEEEEEEERE) has biased composition (acidic residues). Serine 277 bears the Phosphoserine mark. The segment covering 423–436 (PNSVHSIPRSSPEG) has biased composition (polar residues). Intrachain disulfides connect cysteine 445–cysteine 472, cysteine 446–cysteine 479, cysteine 459–cysteine 480, cysteine 489–cysteine 518, cysteine 502–cysteine 519, cysteine 521–cysteine 545, cysteine 522–cysteine 552, cysteine 535–cysteine 553, cysteine 608–cysteine 620, cysteine 616–cysteine 629, cysteine 631–cysteine 644, cysteine 683–cysteine 693, cysteine 689–cysteine 702, cysteine 704–cysteine 717, cysteine 723–cysteine 736, cysteine 730–cysteine 745, cysteine 751–cysteine 762, cysteine 768–cysteine 781, cysteine 775–cysteine 790, cysteine 796–cysteine 808, cysteine 814–cysteine 827, cysteine 821–cysteine 836, cysteine 843–cysteine 856, cysteine 862–cysteine 875, cysteine 869–cysteine 884, cysteine 886–cysteine 899, cysteine 905–cysteine 917, cysteine 913–cysteine 926, cysteine 928–cysteine 941, cysteine 947–cysteine 956, cysteine 952–cysteine 965, cysteine 967–cysteine 980, cysteine 986–cysteine 998, cysteine 994–cysteine 1007, cysteine 1009–cysteine 1023, cysteine 1029–cysteine 1042, cysteine 1036–cysteine 1051, and cysteine 1056–cysteine 1068. Anaphylatoxin-like domains are found at residues 445–480 (CCAAGQQWAIDNDECLEIPESGTEDNVCRTAQRHCC), 488–519 (SCMAGVLGAKEGETCGAEDNDSCGISLYKQCC), and 521–553 (CCGLGLRVRAEGQSCESNPNLGYPCNHVMLSCC). N-linked (GlcNAc...) asparagine glycosylation is present at asparagine 507. In terms of domain architecture, EGF-like 1; calcium-binding spans 604 to 645 (DQDECLLLPGELCQHLCINTVGSYHCACFPGFSLQDDGRTCR). Residues 679 to 718 (QPNTCKDNGPCKQVCSTVGGSAICSCFPGYAIMADGVSCE) enclose the EGF-like 2 domain. Positions 719-763 (DINECVTDLHTCSRGEHCVNTLGSFHCYKALTCEPGYALKDGECE) constitute an EGF-like 3; calcium-binding domain. The region spanning 764 to 809 (DVDECAMGTHTCQPGFLCQNTKGSFYCQARQRCMDGFLQDPEGNCV) is the EGF-like 4; calcium-binding domain. The region spanning 810 to 857 (DINECTSLSEPCRPGFSCINTVGSYTCQRNPLICARGYHASDDGTKCV) is the EGF-like 5; calcium-binding domain. An EGF-like 6; calcium-binding domain is found at 858 to 900 (DVNECETGVHRCGEGQVCHNLPGSYRCDCKAGFQRDAFGRGCI). The 42-residue stretch at 901-942 (DVNECWASPGRLCQHTCENTLGSYRCSCASGFLLAADGKRCE) folds into the EGF-like 7; calcium-binding domain. The region spanning 943 to 981 (DVNECEAQRCSQECANIYGSYQCYCRQGYQLAEDGHTCT) is the EGF-like 8; calcium-binding domain. The region spanning 982–1024 (DIDECAQGAGILCTFRCLNVPGSYQCACPEQGYTMTANGRSCK) is the EGF-like 9; calcium-binding domain. Residues 1025 to 1069 (DVDECALGTHNCSEAETCHNIQGSFRCLRFECPPNYVQVSKTKCE) form the EGF-like 10; calcium-binding domain. N-linked (GlcNAc...) asparagine glycosylation occurs at asparagine 1035. Residues 1070–1184 (RTTCHDFLEC…MHIFFTTFAL (115 aa)) form a domain III region.

This sequence belongs to the fibulin family. Homotrimer; disulfide-linked. Interacts with LAMA2. Interacts with FBN1 (via N-terminal domain). Forms a ternary complex with ELN and FBN1. O-glycosylated with core 1 or possibly core 8 glycans. It is unsure if the O-glycosylation is on Thr-347 or Ser-348. Component of both basement membranes and other connective tissues. Expressed in heart, placenta and ovary.

The protein resides in the secreted. Its subcellular location is the extracellular space. It localises to the extracellular matrix. Its function is as follows. Its binding to fibronectin and some other ligands is calcium dependent. May act as an adapter that mediates the interaction between FBN1 and ELN. The polypeptide is Fibulin-2 (FBLN2) (Homo sapiens (Human)).